The sequence spans 349 residues: Alanine racemase (349 aa).

K35 serves as the catalytic Proton acceptor; specific for D-alanine. N6-(pyridoxal phosphate)lysine is present on K35. R130 contributes to the substrate binding site. Y244 (proton acceptor; specific for L-alanine) is an active-site residue. M292 contributes to the substrate binding site.

It belongs to the alanine racemase family. It depends on pyridoxal 5'-phosphate as a cofactor.

It carries out the reaction L-alanine = D-alanine. It functions in the pathway amino-acid biosynthesis; D-alanine biosynthesis; D-alanine from L-alanine: step 1/1. Catalyzes the interconversion of L-alanine and D-alanine. May also act on other amino acids. This chain is Alanine racemase (alr), found in Dinoroseobacter shibae (strain DSM 16493 / NCIMB 14021 / DFL 12).